Reading from the N-terminus, the 741-residue chain is Lamin-B receptor (741 aa).

The tract at residues 29–126 is disordered; it reads RLRRPRRTED…TGSGSGSSLP (98 aa). Low complexity-rich tracts occupy residues 57-84 and 109-126; these read TRRT…RTRA and PRSS…SSLP. Ser111 bears the Phosphoserine mark. Thr135 carries the phosphothreonine modification. Ser144 is modified (phosphoserine). Positions 160-184 are enriched in polar residues; that stretch reads TNTSSGAPNKAFNTSSVNSGNSFSR. Positions 160-194 are disordered; the sequence is TNTSSGAPNKAFNTSSVNSGNSFSRTTTSSTTTTT. Residues 185-194 show a composition bias toward low complexity; that stretch reads TTTSSTTTTT. Phosphoserine is present on residues Ser223 and Ser225. Positions 231–240 are enriched in polar residues; it reads LAGTPVTNTE. Residues 231–277 form a disordered region; that stretch reads LAGTPVTNTEEGSRYSRSVSRSVYDDEKSSKRSYSTGEEDIDEEDEL. Thr234 and Thr237 each carry phosphothreonine. A phosphoserine mark is found at Ser243, Ser246, Ser248, Ser250, and Ser263. Thr266 carries the phosphothreonine modification. The span at 267–277 shows a compositional bias: acidic residues; that stretch reads GEEDIDEEDEL. The residue at position 284 (Ser284) is a Phosphoserine. At Thr288 the chain carries Phosphothreonine. At Ser291 the chain carries Phosphoserine. Thr293 bears the Phosphothreonine mark. A Phosphoserine modification is found at Ser298. Transmembrane regions (helical) follow at residues 308-328, 363-383, 402-422, 429-449, 497-517, 543-563, 577-599, and 604-624; these read FGGW…VYYL, VVGA…LLPG, LTLL…VTFV, FCIF…WLVD, LSLV…LVWP, PATL…IIFE, YGCL…TKYF, and VPIS…LGLL. Ser640 and Ser642 each carry phosphoserine. Residues 687–707 form a helical membrane-spanning segment; that stretch reads MALRPAWPPVLGLSLIILLLL.

This sequence belongs to the ERG4/ERG24 family. Interacts directly with LAM.

The protein localises to the nucleus inner membrane. Anchors the lamina and the heterochromatin to the inner nuclear membrane. The polypeptide is Lamin-B receptor (Drosophila melanogaster (Fruit fly)).